The following is a 463-amino-acid chain: tRNA modification GTPase MnmE (463 aa).

3 residues coordinate (6S)-5-formyl-5,6,7,8-tetrahydrofolate: Arg-26, Glu-88, and Arg-127. The region spanning 224-383 (GLATAIIGRP…LEQRIAKMFF (160 aa)) is the TrmE-type G domain. Asn-234 contributes to the K(+) binding site. GTP contacts are provided by residues 234–239 (NVGKSS), 253–259 (TDVAGTT), and 278–281 (DTAG). Ser-238 serves as a coordination point for Mg(2+). Thr-253, Val-255, and Thr-258 together coordinate K(+). Thr-259 contributes to the Mg(2+) binding site. Lys-463 provides a ligand contact to (6S)-5-formyl-5,6,7,8-tetrahydrofolate.

It belongs to the TRAFAC class TrmE-Era-EngA-EngB-Septin-like GTPase superfamily. TrmE GTPase family. As to quaternary structure, homodimer. Heterotetramer of two MnmE and two MnmG subunits. It depends on K(+) as a cofactor.

It is found in the cytoplasm. Exhibits a very high intrinsic GTPase hydrolysis rate. Involved in the addition of a carboxymethylaminomethyl (cmnm) group at the wobble position (U34) of certain tRNAs, forming tRNA-cmnm(5)s(2)U34. This is tRNA modification GTPase MnmE from Lactiplantibacillus plantarum (strain ATCC BAA-793 / NCIMB 8826 / WCFS1) (Lactobacillus plantarum).